The following is a 593-amino-acid chain: La-related protein 7 (593 aa).

The span at 1–11 (MTAIETDTPSN) shows a compositional bias: polar residues. The segment at 1-28 (MTAIETDTPSNKVKEDESTDLRKDREKK) is disordered. A compositionally biased stretch (basic and acidic residues) spans 12–24 (KVKEDESTDLRKD). The region spanning 30-121 (RSRVKQLLAD…RRRFPLGEKP (92 aa)) is the HTH La-type RNA-binding domain. An RRM domain is found at 127–205 (RTVYVELLPK…PRKAGMFPKT (79 aa)). The segment at 191 to 363 (PPEEAPRKAG…STEEEKDAVD (173 aa)) is disordered. Basic residues predominate over residues 231 to 240 (KKKKKKKSKA). Residues 248-259 (AEEDTKEQDMDI) are compositionally biased toward acidic residues. 3 stretches are compositionally biased toward basic and acidic residues: residues 295–307 (ERAE…EKVR), 314–340 (SSSE…DEKP), and 348–363 (QECK…DAVD). Residues 461–574 (QFVCGVIGKI…TEKLIAKAEK (114 aa)) form the xRRM domain.

Belongs to the LARP7 family. Core component of the 7SK RNP complex. Associates with box C/D small nucleolar ribonucleoprotein (snoRNP) complexes.

It localises to the nucleus. Its subcellular location is the nucleoplasm. Its function is as follows. RNA-binding protein that specifically binds distinct small nuclear RNA (snRNAs) and regulates their processing and function. Specifically binds the 7SK snRNA (7SK RNA) and acts as a core component of the 7SK ribonucleoprotein (RNP) complex, thereby acting as a negative regulator of transcription elongation by RNA polymerase II. The 7SK RNP complex sequesters the positive transcription elongation factor b (P-TEFb) in a large inactive 7SK RNP complex preventing RNA polymerase II phosphorylation and subsequent transcriptional elongation. The 7SK RNP complex also promotes snRNA gene transcription by RNA polymerase II via interaction with the little elongation complex (LEC). LARP7 specifically binds to the highly conserved 3'-terminal U-rich stretch of 7SK RNA; on stimulation, remains associated with 7SK RNA, whereas P-TEFb is released from the complex. LARP7 also acts as a regulator of mRNA splicing fidelity by promoting U6 snRNA processing. Specifically binds U6 snRNAs and associates with a subset of box C/D RNP complexes: promotes U6 snRNA 2'-O-methylation by facilitating U6 snRNA loading into box C/D RNP complexes. U6 snRNA 2'-O-methylation is required for mRNA splicing fidelity. The sequence is that of La-related protein 7 from Xenopus tropicalis (Western clawed frog).